Consider the following 132-residue polypeptide: Gonadotropin subunit beta-1 (132 aa).

Residues Met-1–Ala-17 form the signal peptide. Intrachain disulfides connect Cys-25-Cys-73, Cys-39-Cys-88, Cys-50-Cys-104, Cys-54-Cys-106, and Cys-109-Cys-116. 2 N-linked (GlcNAc...) asparagine glycosylation sites follow: Asn-29 and Asn-46.

This sequence belongs to the glycoprotein hormones subunit beta family. In terms of assembly, heterodimer of an alpha and a beta chain.

It localises to the secreted. Its function is as follows. Involved in gametogenesis and steroidogenesis. The protein is Gonadotropin subunit beta-1 (cgba) of Ictalurus punctatus (Channel catfish).